The primary structure comprises 840 residues: Leucine--tRNA ligase (840 aa).

The short motif at 44–55 (PYPSANGLHVGH) is the 'HIGH' region element. The short motif at 617 to 621 (KMSKS) is the 'KMSKS' region element. K620 contributes to the ATP binding site.

It belongs to the class-I aminoacyl-tRNA synthetase family.

It localises to the cytoplasm. The enzyme catalyses tRNA(Leu) + L-leucine + ATP = L-leucyl-tRNA(Leu) + AMP + diphosphate. The chain is Leucine--tRNA ligase from Borreliella afzelii (strain PKo) (Borrelia afzelii).